We begin with the raw amino-acid sequence, 577 residues long: BICD family-like cargo adapter 1 (577 aa).

Residues 63–100 are disordered; the sequence is LLAAGERSSEPGEHPQAEPESPVEGHGPPLPPPPTQDP. Residues 69–79 are compositionally biased toward basic and acidic residues; that stretch reads RSSEPGEHPQA. The CC1 box signature appears at 116–120; that stretch reads AARLG. The stretch at 121 to 379 forms a coiled coil; the sequence is KALLERNQDM…QLWEAYCQVR (259 aa). Positions 389 to 415 are disordered; sequence DSADSAVSTDSSMDESSETSSAKDVPA. Residues 390–399 are compositionally biased toward low complexity; it reads SADSAVSTDS. Residues 443 to 528 adopt a coiled-coil conformation; the sequence is LSVEMTALKE…LEAWQDDMHR (86 aa).

This sequence belongs to the BICDR family. Part of a tripartite complex with dynein and dynactin, acts an adapter linking the dynein motor complex and dynactin. Interacts with KIF1C. Interacts with RAB6A and RAB6B; interaction is specific to Rab6. Highly expressed during early embryonic development. Predominantly expressed in kidney, undifferentiated neural tissue and developing eye.

Its subcellular location is the cytoplasm. The protein localises to the cytoskeleton. The protein resides in the microtubule organizing center. It localises to the centrosome. Its function is as follows. Acts as an adapter protein linking the dynein motor complex to various cargos and converts dynein from a non-processive to a highly processive motor in the presence of dynactin. Facilitates the interaction between dynein and dynactin and activates dynein processivity (the ability to move along a microtubule for a long distance without falling off the track). Predominantly recruits 2 dyneins, which increases both the force and speed of the microtubule motor. Component of secretory vesicle machinery in developing neurons that acts as a regulator of neurite outgrowth. Regulates the secretory vesicle transport by controlling the accumulation of Rab6-containing secretory vesicles in the pericentrosomal region restricting anterograde secretory transport during the early phase of neuronal differentiation, thereby inhibiting neuritogenesis. This chain is BICD family-like cargo adapter 1 (Bicdl1), found in Mus musculus (Mouse).